Here is a 276-residue protein sequence, read N- to C-terminus: 3-methyl-2-oxobutanoate hydroxymethyltransferase (276 aa).

Mg(2+)-binding residues include aspartate 46 and aspartate 85. 3-methyl-2-oxobutanoate-binding positions include aspartate 46–serine 47, aspartate 85, and lysine 115. Glutamate 117 is a Mg(2+) binding site. Glutamate 184 functions as the Proton acceptor in the catalytic mechanism.

Belongs to the PanB family. In terms of assembly, homodecamer; pentamer of dimers. The cofactor is Mg(2+).

Its subcellular location is the cytoplasm. It carries out the reaction 3-methyl-2-oxobutanoate + (6R)-5,10-methylene-5,6,7,8-tetrahydrofolate + H2O = 2-dehydropantoate + (6S)-5,6,7,8-tetrahydrofolate. Its pathway is cofactor biosynthesis; (R)-pantothenate biosynthesis; (R)-pantoate from 3-methyl-2-oxobutanoate: step 1/2. Functionally, catalyzes the reversible reaction in which hydroxymethyl group from 5,10-methylenetetrahydrofolate is transferred onto alpha-ketoisovalerate to form ketopantoate. In Heliobacterium modesticaldum (strain ATCC 51547 / Ice1), this protein is 3-methyl-2-oxobutanoate hydroxymethyltransferase.